We begin with the raw amino-acid sequence, 98 residues long: Defensin (98 aa).

Disulfide bonds link C61–C88, C74–C94, and C78–C96.

It belongs to the invertebrate defensin family. Type 1 subfamily.

The sequence is that of Defensin from Mamestra brassicae (Cabbage moth).